The sequence spans 319 residues: Lipase 1 (319 aa).

Ser189 (nucleophile) is an active-site residue. Residues Asp314 and Asp317 each coordinate Ca(2+).

It carries out the reaction a triacylglycerol + H2O = a diacylglycerol + a fatty acid + H(+). In Moraxella sp. (strain TA144), this protein is Lipase 1 (lip1).